The chain runs to 159 residues: Ribosomal RNA large subunit methyltransferase H (159 aa).

S-adenosyl-L-methionine contacts are provided by residues Leu76, Gly108, and 127-132 (FGLLTL).

The protein belongs to the RNA methyltransferase RlmH family. As to quaternary structure, homodimer.

The protein resides in the cytoplasm. It catalyses the reaction pseudouridine(1915) in 23S rRNA + S-adenosyl-L-methionine = N(3)-methylpseudouridine(1915) in 23S rRNA + S-adenosyl-L-homocysteine + H(+). Functionally, specifically methylates the pseudouridine at position 1915 (m3Psi1915) in 23S rRNA. The sequence is that of Ribosomal RNA large subunit methyltransferase H from Leuconostoc citreum (strain KM20).